Here is a 352-residue protein sequence, read N- to C-terminus: Ketoisovalerate oxidoreductase subunit VorB (352 aa).

In terms of assembly, heterotrimer of the VorA, VorB and VorC subunits.

It carries out the reaction 3-methyl-2-oxobutanoate + 2 oxidized [2Fe-2S]-[ferredoxin] + CoA = 2-methylpropanoyl-CoA + 2 reduced [2Fe-2S]-[ferredoxin] + CO2 + H(+). The protein is Ketoisovalerate oxidoreductase subunit VorB (vorB) of Methanothermobacter thermautotrophicus (strain ATCC 29096 / DSM 1053 / JCM 10044 / NBRC 100330 / Delta H) (Methanobacterium thermoautotrophicum).